A 178-amino-acid polypeptide reads, in one-letter code: Probable chorismate pyruvate-lyase (178 aa).

Residues Arg-73, Leu-111, and Glu-163 each coordinate substrate.

It belongs to the UbiC family.

Its subcellular location is the cytoplasm. It catalyses the reaction chorismate = 4-hydroxybenzoate + pyruvate. The protein operates within cofactor biosynthesis; ubiquinone biosynthesis. Its function is as follows. Removes the pyruvyl group from chorismate, with concomitant aromatization of the ring, to provide 4-hydroxybenzoate (4HB) for the ubiquinone pathway. The chain is Probable chorismate pyruvate-lyase from Pseudomonas aeruginosa (strain ATCC 15692 / DSM 22644 / CIP 104116 / JCM 14847 / LMG 12228 / 1C / PRS 101 / PAO1).